We begin with the raw amino-acid sequence, 1017 residues long: Pikachurin (1017 aa).

The N-terminal stretch at 1-24 (MDLIRGVLLRLLLLASSLGPGAVS) is a signal peptide. Fibronectin type-III domains lie at 37-136 (PPLD…TLSQ) and 144-239 (APQQ…TLCP). Asn-47 carries N-linked (GlcNAc...) asparagine glycosylation. The EGF-like 1 domain occupies 343–381 (FDMPCDETLCSADSFCVNDYTWGGSRCQCTLGKGGESCS). Intrachain disulfides connect Cys-347–Cys-358, Cys-352–Cys-369, Cys-371–Cys-380, Cys-534–Cys-564, Cys-569–Cys-580, Cys-574–Cys-590, Cys-592–Cys-601, Cys-788–Cys-799, Cys-793–Cys-808, Cys-810–Cys-819, and Cys-987–Cys-1014. A Laminin G-like 1 domain is found at 386-564 (IQYPQFFGHS…ALSGADVGEC (179 aa)). 2 EGF-like domains span residues 565–602 (SSGI…RHCE) and 784–820 (AAHP…LHCQ). The 180-residue stretch at 609 to 788 (IPQFRESLRS…VNVENAAHPC (180 aa)) folds into the Laminin G-like 2 domain. Residues 835 to 1014 (IEIPQFIGRS…AVDGKNINTC (180 aa)) enclose the Laminin G-like 3 domain.

In terms of assembly, interacts with DAG1 alpha-dystroglycan. Interacts with GPR158 and GPR179; transsynaptic interaction is required for synaptic organization of photoreceptor cells. Post-translationally, O-glycosylated; contains chondroitin sulfate and heparan sulfate.

The protein resides in the secreted. Its subcellular location is the extracellular space. The protein localises to the extracellular matrix. It is found in the synaptic cleft. It localises to the presynaptic active zone. Its function is as follows. Involved in both the retinal photoreceptor ribbon synapse formation and physiological functions of visual perception. Plays a key role in the synaptic organization of photoreceptors by mediating transsynaptic interaction between alpha-dystroglycan and GPR179 on the postsynaptic membrane. Necessary for proper bipolar dendritic tip apposition to the photoreceptor ribbon synapse. Promotes matrix assembly and cell adhesiveness. This is Pikachurin (EGFLAM) from Homo sapiens (Human).